Consider the following 736-residue polypeptide: Phosphoribosylformylglycinamidine synthase subunit PurL (736 aa).

H49 is a catalytic residue. Residues Y52 and K91 each contribute to the ATP site. Mg(2+) is bound at residue E93. Residues 94 to 97 (SHNH) and R116 each bind substrate. H95 acts as the Proton acceptor in catalysis. Residue D117 coordinates Mg(2+). Residue Q240 coordinates substrate. A Mg(2+)-binding site is contributed by D268. Residue 312 to 314 (ESQ) coordinates substrate. ATP-binding residues include D493 and G530. N531 is a Mg(2+) binding site. S533 provides a ligand contact to substrate.

The protein belongs to the FGAMS family. In terms of assembly, monomer. Part of the FGAM synthase complex composed of 1 PurL, 1 PurQ and 2 PurS subunits.

The protein localises to the cytoplasm. The catalysed reaction is N(2)-formyl-N(1)-(5-phospho-beta-D-ribosyl)glycinamide + L-glutamine + ATP + H2O = 2-formamido-N(1)-(5-O-phospho-beta-D-ribosyl)acetamidine + L-glutamate + ADP + phosphate + H(+). The protein operates within purine metabolism; IMP biosynthesis via de novo pathway; 5-amino-1-(5-phospho-D-ribosyl)imidazole from N(2)-formyl-N(1)-(5-phospho-D-ribosyl)glycinamide: step 1/2. In terms of biological role, part of the phosphoribosylformylglycinamidine synthase complex involved in the purines biosynthetic pathway. Catalyzes the ATP-dependent conversion of formylglycinamide ribonucleotide (FGAR) and glutamine to yield formylglycinamidine ribonucleotide (FGAM) and glutamate. The FGAM synthase complex is composed of three subunits. PurQ produces an ammonia molecule by converting glutamine to glutamate. PurL transfers the ammonia molecule to FGAR to form FGAM in an ATP-dependent manner. PurS interacts with PurQ and PurL and is thought to assist in the transfer of the ammonia molecule from PurQ to PurL. In Rhodopseudomonas palustris (strain TIE-1), this protein is Phosphoribosylformylglycinamidine synthase subunit PurL.